The sequence spans 75 residues: Large ribosomal subunit protein bL28c (75 aa).

The protein belongs to the bacterial ribosomal protein bL28 family.

The protein resides in the plastid. It localises to the chloroplast. The sequence is that of Large ribosomal subunit protein bL28c from Cyanidioschyzon merolae (strain NIES-3377 / 10D) (Unicellular red alga).